Consider the following 149-residue polypeptide: Large ribosomal subunit protein bL9 (149 aa).

The protein belongs to the bacterial ribosomal protein bL9 family.

Its function is as follows. Binds to the 23S rRNA. The chain is Large ribosomal subunit protein bL9 from Magnetococcus marinus (strain ATCC BAA-1437 / JCM 17883 / MC-1).